A 68-amino-acid chain; its full sequence is Large ribosomal subunit protein uL29 (68 aa).

Belongs to the universal ribosomal protein uL29 family.

This is Large ribosomal subunit protein uL29 from Picosynechococcus sp. (strain ATCC 27264 / PCC 7002 / PR-6) (Agmenellum quadruplicatum).